Consider the following 396-residue polypeptide: ATP-dependent RNA helicase eIF4A (396 aa).

A Q motif motif is present at residues 22–50 (YSFDDLKLKEELLRGIFGYGFVEPSAIQQ). The Helicase ATP-binding domain occupies 53–223 (ILPIIEGKDV…SKFMKDPVRI (171 aa)). 66-73 (AQSGTGKT) contacts ATP. The DEAD box signature appears at 171–174 (DEAD). The Helicase C-terminal domain occupies 234 to 395 (GIGQYYVNVE…ELPSSISELF (162 aa)).

It belongs to the DEAD box helicase family. eIF4A subfamily. As to quaternary structure, component of the eIF4F complex, which composition varies with external and internal environmental conditions. It is composed of at least eIF4A, eIF4E and eIF4G.

It localises to the cytoplasm. The catalysed reaction is ATP + H2O = ADP + phosphate + H(+). ATP-dependent RNA helicase which is a subunit of the eIF4F complex involved in cap recognition and is required for mRNA binding to ribosome. In the current model of translation initiation, eIF4A unwinds RNA secondary structures in the 5'-UTR of mRNAs which is necessary to allow efficient binding of the small ribosomal subunit, and subsequent scanning for the initiator codon. This is ATP-dependent RNA helicase eIF4A (TIF1) from Kluyveromyces lactis (strain ATCC 8585 / CBS 2359 / DSM 70799 / NBRC 1267 / NRRL Y-1140 / WM37) (Yeast).